The chain runs to 140 residues: Nucleoside diphosphate kinase (140 aa).

ATP is bound by residues Lys-11, Phe-59, Arg-87, Thr-93, Arg-104, and Asn-114. His-117 acts as the Pros-phosphohistidine intermediate in catalysis.

The protein belongs to the NDK family. As to quaternary structure, homotetramer. Requires Mg(2+) as cofactor.

The protein localises to the cytoplasm. It catalyses the reaction a 2'-deoxyribonucleoside 5'-diphosphate + ATP = a 2'-deoxyribonucleoside 5'-triphosphate + ADP. It carries out the reaction a ribonucleoside 5'-diphosphate + ATP = a ribonucleoside 5'-triphosphate + ADP. Major role in the synthesis of nucleoside triphosphates other than ATP. The ATP gamma phosphate is transferred to the NDP beta phosphate via a ping-pong mechanism, using a phosphorylated active-site intermediate. The chain is Nucleoside diphosphate kinase from Francisella philomiragia subsp. philomiragia (strain ATCC 25017 / CCUG 19701 / FSC 153 / O#319-036).